We begin with the raw amino-acid sequence, 292 residues long: uncharacterized protein (292 aa).

An N-terminal signal peptide occupies residues 1–19; it reads MFKKYIFILLLLVTSIVKA. A disordered region spans residues 271 to 292; it reads KRNNPPLKTNNAKSKNPYDQSK.

This is an uncharacterized protein from Rickettsia bellii (strain RML369-C).